Consider the following 158-residue polypeptide: Large ribosomal subunit protein uL11 (158 aa).

Belongs to the universal ribosomal protein uL11 family. As to quaternary structure, part of the ribosomal stalk of the 50S ribosomal subunit. Interacts with L10 and the large rRNA to form the base of the stalk. L10 forms an elongated spine to which L12 dimers bind in a sequential fashion forming a multimeric L10(L12)X complex.

Forms part of the ribosomal stalk which helps the ribosome interact with GTP-bound translation factors. This chain is Large ribosomal subunit protein uL11, found in Methanospirillum hungatei JF-1 (strain ATCC 27890 / DSM 864 / NBRC 100397 / JF-1).